We begin with the raw amino-acid sequence, 440 residues long: Serine hydroxymethyltransferase (440 aa).

(6S)-5,6,7,8-tetrahydrofolate is bound by residues Leu119 and Gly123 to Leu125. At Lys228 the chain carries N6-(pyridoxal phosphate)lysine. Ser370 to Phe372 is a binding site for (6S)-5,6,7,8-tetrahydrofolate.

Belongs to the SHMT family. As to quaternary structure, homodimer. The cofactor is pyridoxal 5'-phosphate.

The protein localises to the cytoplasm. The catalysed reaction is (6R)-5,10-methylene-5,6,7,8-tetrahydrofolate + glycine + H2O = (6S)-5,6,7,8-tetrahydrofolate + L-serine. The protein operates within one-carbon metabolism; tetrahydrofolate interconversion. It functions in the pathway amino-acid biosynthesis; glycine biosynthesis; glycine from L-serine: step 1/1. Catalyzes the reversible interconversion of serine and glycine with tetrahydrofolate (THF) serving as the one-carbon carrier. This reaction serves as the major source of one-carbon groups required for the biosynthesis of purines, thymidylate, methionine, and other important biomolecules. Also exhibits THF-independent aldolase activity toward beta-hydroxyamino acids, producing glycine and aldehydes, via a retro-aldol mechanism. The protein is Serine hydroxymethyltransferase of Chlorobium luteolum (strain DSM 273 / BCRC 81028 / 2530) (Pelodictyon luteolum).